A 266-amino-acid polypeptide reads, in one-letter code: Indole-3-glycerol phosphate synthase (266 aa).

This sequence belongs to the TrpC family.

The catalysed reaction is 1-(2-carboxyphenylamino)-1-deoxy-D-ribulose 5-phosphate + H(+) = (1S,2R)-1-C-(indol-3-yl)glycerol 3-phosphate + CO2 + H2O. Its pathway is amino-acid biosynthesis; L-tryptophan biosynthesis; L-tryptophan from chorismate: step 4/5. The polypeptide is Indole-3-glycerol phosphate synthase (Opitutus terrae (strain DSM 11246 / JCM 15787 / PB90-1)).